The sequence spans 220 residues: Phosphoenolpyruvate guanylyltransferase (220 aa).

Phosphoenolpyruvate-binding residues include Thr154, Gly169, and Ser172.

The protein belongs to the CofC family.

It catalyses the reaction phosphoenolpyruvate + GTP + H(+) = enolpyruvoyl-2-diphospho-5'-guanosine + diphosphate. It functions in the pathway cofactor biosynthesis; coenzyme F420 biosynthesis. Functionally, guanylyltransferase that catalyzes the activation of phosphoenolpyruvate (PEP) as enolpyruvoyl-2-diphospho-5'-guanosine, via the condensation of PEP with GTP. It is involved in the biosynthesis of coenzyme F420, a hydride carrier cofactor. The sequence is that of Phosphoenolpyruvate guanylyltransferase from Mycolicibacterium paratuberculosis (strain ATCC BAA-968 / K-10) (Mycobacterium paratuberculosis).